We begin with the raw amino-acid sequence, 753 residues long: MNPYQNNDEIVDVPENYDNNLNRYPYANDPNVAMQNTNYKDWMNGYEEINPSSITAILASIGILNRVIALTGVLGNTQEVISIIQDALGFIRNGTGNELLIHVEQLIQQTLATQYRSAATGAIYGISRSYDNYLMFFRQWERNRTRENGQQVESAFTTINTLCINALAPQASLSRRGFETLLLPNYAMAANFHLLLLRDAVLYRNQWLSNSISTANVNLNILRAAINEYITHCTRWYQDGLNRFDRSSRANMNEWRRFNAYRRDMTLSVLDFATVFPTYDPVLFPAATNVELTRVVYTDPIVMAGGRTAIPGFTRMENLVNSASRVSFLNQMNIYTSFYFRPHNIPRYYWSGNQNFLSNGTSNLYGYRSDGRTTFNVSNIDIFRVNMTTHIGGAFTDDYRGLHRAEFIGANTQNNQRTSLLYSVEIPSSHFRFENHTVFLPGESGLEPNERNYTHRLFQMMNEVSVNPNARGRVFLHAWTHRSLRRTNGLRSDQILQIPAVKTISNGGDRAVVLNYGENIMKLDNLTTGLSYKLTAVDSEASNTRFIVRVRYASMNNNKLNLVLNGAQIASLNVEHTVQRGGSLTDLQYGNFKYATFAGNFKMGSQSILGIFKEIPNIDFVLDKIELIPSNFMSSLEQTQNYNTYNQDTIYTHNQGYDTYDQNSSGMYHQSYNNYDQNMDTTYQPSYDNYNQNASGTYDDGYNPNASDSYDQSYTNNYSQNTNSMYDQGYYNNNYDQHSGCTCNQGYDNNYLK.

The segment covering 680–696 has biased composition (polar residues); it reads DTTYQPSYDNYNQNASG. The tract at residues 680–721 is disordered; sequence DTTYQPSYDNYNQNASGTYDDGYNPNASDSYDQSYTNNYSQN. Residues 712-721 are compositionally biased toward low complexity; that stretch reads QSYTNNYSQN.

This sequence belongs to the delta endotoxin family. Post-translationally, has low mosquitocidal activity probably due to rapid proteolysis to inactive 56 kDa and 43 kDa proteins.

Promotes colloidosmotic lysis by binding to the midgut epithelial cells of mosquitos. Active against Aedes aegypti and Culex quinquefasciatus larvae. The sequence is that of Pesticidal crystal protein Cry20Aa (cry20Aa) from Bacillus thuringiensis subsp. fukuokaensis.